The primary structure comprises 217 residues: uncharacterized protein (217 aa).

The N-terminal stretch at 1–24 (MRYTVLIALQGALLLLLLIDDGQG) is a signal peptide.

This is an uncharacterized protein from Aedes vexans (Inland floodwater mosquito).